Consider the following 366-residue polypeptide: Histidinol-phosphate aminotransferase (366 aa).

Lys-228 carries the N6-(pyridoxal phosphate)lysine modification.

This sequence belongs to the class-II pyridoxal-phosphate-dependent aminotransferase family. Histidinol-phosphate aminotransferase subfamily. As to quaternary structure, homodimer. The cofactor is pyridoxal 5'-phosphate.

It carries out the reaction L-histidinol phosphate + 2-oxoglutarate = 3-(imidazol-4-yl)-2-oxopropyl phosphate + L-glutamate. The protein operates within amino-acid biosynthesis; L-histidine biosynthesis; L-histidine from 5-phospho-alpha-D-ribose 1-diphosphate: step 7/9. In Stutzerimonas stutzeri (Pseudomonas stutzeri), this protein is Histidinol-phosphate aminotransferase.